An 801-amino-acid polypeptide reads, in one-letter code: Phenylalanine--tRNA ligase beta subunit (801 aa).

Residues 39-153 enclose the tRNA-binding domain; it reads AEGLSKLVVG…EDAVPGESIF (115 aa). The region spanning 406 to 481 is the B5 domain; that stretch reads TDDIQVSTSL…RIYGYDKLPT (76 aa). The Mg(2+) site is built by D459, D465, E468, and E469. Residues 708 to 801 enclose the FDX-ACB domain; that stretch reads TKFPAVSRDI…LTEKVGAEVR (94 aa).

Belongs to the phenylalanyl-tRNA synthetase beta subunit family. Type 1 subfamily. In terms of assembly, tetramer of two alpha and two beta subunits. Mg(2+) serves as cofactor.

It localises to the cytoplasm. The enzyme catalyses tRNA(Phe) + L-phenylalanine + ATP = L-phenylalanyl-tRNA(Phe) + AMP + diphosphate + H(+). This is Phenylalanine--tRNA ligase beta subunit from Streptococcus mutans serotype c (strain ATCC 700610 / UA159).